We begin with the raw amino-acid sequence, 67 residues long: MLSLDFNNELIKAAPIVGTGVADVSARRFFGLSLNEWFYVARIAYTVVXIGAKVVDKIIDWKKATKE.

Residues 1-36 are Cytoplasmic-facing; that stretch reads MLSLDFNNELIKAAPIVGTGVADVSARRFFGLSLNE. A helical; Signal-anchor for type II membrane protein transmembrane segment spans residues 37–55; it reads WFYVARIAYTVVXIGAKVV. Residues 56–67 lie on the Periplasmic side of the membrane; it reads DKIIDWKKATKE.

Belongs to the T7likevirus holin family. As to quaternary structure, homomultimer.

The protein resides in the host cell inner membrane. Its function is as follows. Accumulates harmlessly in the cytoplasmic membrane until it reaches a critical concentration that triggers the formation of micron-scale pores (holes) causing host cell membrane disruption and endolysin escape into the periplasmic space. Participates in determining the precise timing of host cell lysis. Participates with the endolysin and spanin proteins in the sequential events which lead to the programmed host cell lysis releasing the mature viral particles from the host cell. In Escherichia coli (Bacteriophage T3), this protein is Holin (17.5).